The primary structure comprises 326 residues: Zona pellucida-binding protein 2 (326 aa).

Residues 1–20 form the signal peptide; that stretch reads MLAWALLSAVLWSLAGVGSA. Residues Asn-86, Asn-220, and Asn-256 are each glycosylated (N-linked (GlcNAc...) asparagine).

The protein belongs to the zona pellucida-binding protein Sp38 family. Post-translationally, N-glycosylated.

Its subcellular location is the secreted. The protein localises to the cytoplasmic vesicle. The protein resides in the secretory vesicle. It is found in the acrosome. Is implicated in sperm-oocyte interaction during fertilization. The polypeptide is Zona pellucida-binding protein 2 (Zpbp2) (Rattus norvegicus (Rat)).